A 273-amino-acid chain; its full sequence is Formamidopyrimidine-DNA glycosylase (273 aa).

Catalysis depends on proline 2, which acts as the Schiff-base intermediate with DNA. Glutamate 3 serves as the catalytic Proton donor. The active-site Proton donor; for beta-elimination activity is lysine 60. Residues histidine 94, arginine 113, and lysine 154 each contribute to the DNA site. The FPG-type zinc finger occupies glutamate 239–alanine 273. Residue arginine 263 is the Proton donor; for delta-elimination activity of the active site.

This sequence belongs to the FPG family. Monomer. Zn(2+) serves as cofactor.

It carries out the reaction Hydrolysis of DNA containing ring-opened 7-methylguanine residues, releasing 2,6-diamino-4-hydroxy-5-(N-methyl)formamidopyrimidine.. It catalyses the reaction 2'-deoxyribonucleotide-(2'-deoxyribose 5'-phosphate)-2'-deoxyribonucleotide-DNA = a 3'-end 2'-deoxyribonucleotide-(2,3-dehydro-2,3-deoxyribose 5'-phosphate)-DNA + a 5'-end 5'-phospho-2'-deoxyribonucleoside-DNA + H(+). Involved in base excision repair of DNA damaged by oxidation or by mutagenic agents. Acts as a DNA glycosylase that recognizes and removes damaged bases. Has a preference for oxidized purines, such as 7,8-dihydro-8-oxoguanine (8-oxoG). Has AP (apurinic/apyrimidinic) lyase activity and introduces nicks in the DNA strand. Cleaves the DNA backbone by beta-delta elimination to generate a single-strand break at the site of the removed base with both 3'- and 5'-phosphates. In Herpetosiphon aurantiacus (strain ATCC 23779 / DSM 785 / 114-95), this protein is Formamidopyrimidine-DNA glycosylase.